Consider the following 191-residue polypeptide: NAD(P)H-dependent FMN reductase LOT6 (191 aa).

Residues Arg-11, 94–97, and Tyr-124 each bind FMN; that span reads QYNW.

In terms of assembly, homodimer.

The protein localises to the cytoplasm. It is found in the nucleus. It catalyses the reaction FMNH2 + NADP(+) = FMN + NADPH + 2 H(+). The enzyme catalyses FMNH2 + NAD(+) = FMN + NADH + 2 H(+). In terms of biological role, has several reductase activities that are NAD(P)H-dependent and involve FMN as a cofactor, ferricyanide being the best substrate for reduction. May be involved in ferric iron assimilation. In Saccharomyces cerevisiae (strain ATCC 204508 / S288c) (Baker's yeast), this protein is NAD(P)H-dependent FMN reductase LOT6 (LOT6).